A 114-amino-acid chain; its full sequence is MTNTAATTEAKMATEPPKIVWNEGKRRFETEDHEAFIEYKMRNNGKVMDLVHTYVPSFKRGLGLASHLCVAAFEHASSHSISIIPSCSYVSDTFLPRNPSWKPLIHSEVFKSSI.

Residue Thr-2 is modified to N-acetylthreonine. The N-acetyltransferase domain maps to 18–106; the sequence is KIVWNEGKRR…RNPSWKPLIH (89 aa). CoA-binding positions include 52–55 and 61–66; these read HTYV and GLGLAS. The active-site Nucleophile is the Cys-87. Residues 88-89, Thr-93, and Arg-97 contribute to the CoA site; that span reads SY.

The protein localises to the peroxisome. Its function is as follows. Possesses in vitro histone acetyltransferase activity with histones H3 and H4. The sequence is that of Acetyltransferase At1g77540 from Arabidopsis thaliana (Mouse-ear cress).